A 233-amino-acid polypeptide reads, in one-letter code: Ribose-5-phosphate isomerase A (233 aa).

Residues 28–31 (SGST), 83–86 (DGAD), and 96–99 (KGGG) each bind substrate. Glu-105 (proton acceptor) is an active-site residue. Lys-123 serves as a coordination point for substrate.

The protein belongs to the ribose 5-phosphate isomerase family. In terms of assembly, homodimer.

The enzyme catalyses aldehydo-D-ribose 5-phosphate = D-ribulose 5-phosphate. Its pathway is carbohydrate degradation; pentose phosphate pathway; D-ribose 5-phosphate from D-ribulose 5-phosphate (non-oxidative stage): step 1/1. Its function is as follows. Catalyzes the reversible conversion of ribose-5-phosphate to ribulose 5-phosphate. This chain is Ribose-5-phosphate isomerase A, found in Bartonella bacilliformis (strain ATCC 35685 / KC583 / Herrer 020/F12,63).